A 78-amino-acid chain; its full sequence is Large ribosomal subunit protein bL28 (78 aa).

It belongs to the bacterial ribosomal protein bL28 family.

In Synechococcus sp. (strain WH7803), this protein is Large ribosomal subunit protein bL28.